Here is a 236-residue protein sequence, read N- to C-terminus: MNWQFATAFGALMYFGCVIPLSAAEYEALRQKMVREVIAASGNSPPGASVVAAMEKVERHRFVPAWLSIFAYRNHPLPIGHGQTISQPLIVARMTELLKLKKDDKVLEIGTGSGYQAAVLAEIAKTVYTIEIIEPLGNEAAGRLQSLGYDNVKTRIGDGYYGWPEAAPFDAILVTAAASHVPPPLLKQLKPGGRMVVPLGAPFMTQYLMLVEKQPDGSVTTHQIVPVRFVPLRGGH.

Residue serine 86 is part of the active site.

Belongs to the methyltransferase superfamily. L-isoaspartyl/D-aspartyl protein methyltransferase family.

It localises to the cytoplasm. The catalysed reaction is [protein]-L-isoaspartate + S-adenosyl-L-methionine = [protein]-L-isoaspartate alpha-methyl ester + S-adenosyl-L-homocysteine. Its function is as follows. Catalyzes the methyl esterification of L-isoaspartyl residues in peptides and proteins that result from spontaneous decomposition of normal L-aspartyl and L-asparaginyl residues. It plays a role in the repair and/or degradation of damaged proteins. The sequence is that of Protein-L-isoaspartate O-methyltransferase 1 from Nitrosospira multiformis (strain ATCC 25196 / NCIMB 11849 / C 71).